A 486-amino-acid chain; its full sequence is Cardiolipin synthase A (486 aa).

2 helical membrane-spanning segments follow: residues 3–23 (TFYTVISWLLVFGYWLLIAGV) and 38–58 (MAWLLVIYILPLVGIVAYLSF). 2 PLD phosphodiesterase domains span residues 219–246 (MDLRQHRKIILIDNRIAYTGSMNMVDPR) and 399–426 (KDGLLHTKSVLVDGQLSLVGTVNLDMRS). Catalysis depends on residues His-224, Lys-226, Asp-231, His-404, Lys-406, and Asp-411.

It belongs to the phospholipase D family. Cardiolipin synthase subfamily. ClsA sub-subfamily.

The protein localises to the cell inner membrane. The enzyme catalyses 2 a 1,2-diacyl-sn-glycero-3-phospho-(1'-sn-glycerol) = a cardiolipin + glycerol. Functionally, catalyzes the reversible phosphatidyl group transfer from one phosphatidylglycerol molecule to another to form cardiolipin (CL) (diphosphatidylglycerol) and glycerol. The polypeptide is Cardiolipin synthase A (Pectobacterium carotovorum subsp. carotovorum (strain PC1)).